The following is a 586-amino-acid chain: BTB/POZ domain and ankyrin repeat-containing protein NPR1 (586 aa).

Positions 63 to 139 constitute a BTB domain; it reads SDADIVVEGI…VYTGKLKPSP (77 aa). A C2HC NPR-type zinc finger spans residues 142–156; sequence VSTCVHNVCAHDACR. Zn(2+) contacts are provided by Cys145, Cys150, His152, and Cys155. ANK repeat units lie at residues 266-296, 298-325, and 329-358; these read KRIR…TLDE, NALH…DVNL, and RGYT…RASE. The segment at 388-522 is salicylic acid-binding core (SBC); it reads EANKDRICID…LDKFIDDDLP (135 aa). Arg433 provides a ligand contact to salicylate. The disordered stretch occupies residues 561–586; it reads NLSGLSSSSSTTSPEKIGANQKVREP. Residues 562-573 are compositionally biased toward low complexity; that stretch reads LSGLSSSSSTTS.

The protein belongs to the plant 'ANKYRIN-BTB/POZ' family. 'NPR1-like' subfamily. As to expression, highly expressed in leaves. Expressed at low levels in roots and stems.

The protein localises to the cytoplasm. The protein resides in the nucleus. It is found in the nuclear body. It participates in protein modification; protein ubiquitination. Functionally, salicylic acid (SA)-binding substrate-specific adapter of an E3 ubiquitin-protein ligase complex (CUL3-RBX1-BTB) which mediates the ubiquitination and subsequent proteasomal degradation of target proteins. Transcription cofactor that represses gene expression in the absence of salicylic acid (SA), when attached to negative cis-elements (W-box) with WRKY transcription factors, but stimulates gene expression upon activation by SA, when sumoylated and attached to positive cis-elements (as-1) with TGA transcription factors, thus confering immunity through a series of gene regulations ending in a significant increase in antimicrobial and defense genes expression. Probable component of the salicylic acid (SA) defense signaling pathway and pathogen-induced systemic acquired resistance (SAR). May be involved in disease resistance against fungal pathogens. May be involved in tolerance to salt and osmotic stresses. The polypeptide is BTB/POZ domain and ankyrin repeat-containing protein NPR1 (Malus hupehensis (Chinese crab apple)).